Here is a 265-residue protein sequence, read N- to C-terminus: MDSKQMCEEIKKRLARDDWTFQFDRKKDTLRIEDKETKKGVTISLPGVIAKWYEQKDEAVDEIVYYVEQALNTMHEKHTLSGKEKDIYPVIRSTSFPTETKEGIPLLYDEHTAETRIYYALDLGNTYRLIDKKMMEQEQWNEERIKEIARFNVRSLDVHVKEDKVAGNTFYFVNTNDGYDASRILNEPFLAKMKKKITGTMALAVPHQDVLIIADLQNEVGYDVLAQMTMSFFASGRVPITALSFLYEDGELEPIFILGKNYRKK.

Belongs to the UPF0354 family.

The polypeptide is UPF0354 protein GWCH70_2742 (Geobacillus sp. (strain WCH70)).